The primary structure comprises 183 residues: Large ribosomal subunit protein uL22 (183 aa).

Belongs to the universal ribosomal protein uL22 family.

The polypeptide is Large ribosomal subunit protein uL22 (RPL17) (Podocoryna carnea (Hydrozoan)).